The following is a 191-amino-acid chain: Protein Ves (191 aa).

Belongs to the Ves family.

The protein is Protein Ves of Escherichia coli (strain ATCC 8739 / DSM 1576 / NBRC 3972 / NCIMB 8545 / WDCM 00012 / Crooks).